The sequence spans 410 residues: Probable inactive allantoicase (410 aa).

Belongs to the allantoicase family.

Its function is as follows. The function of this enzyme is unclear as allantoicase activity is not known to exist in mammals. The protein is Probable inactive allantoicase (ALLC) of Macaca fascicularis (Crab-eating macaque).